Here is a 687-residue protein sequence, read N- to C-terminus: Protein Smaug homolog 2 (687 aa).

Residues Thr-160–Ser-172 show a composition bias toward basic and acidic residues. Residues Thr-160 to Met-301 are disordered. At Ser-172 the chain carries Phosphoserine. 2 stretches are compositionally biased toward low complexity: residues Trp-175–Trp-190 and His-200–Pro-211. Positions Ser-215–Leu-224 are enriched in polar residues. Phosphoserine occurs at positions 271, 278, 279, and 281. Residues Ser-278–Ser-290 are compositionally biased toward low complexity. Positions Ser-299–Glu-372 constitute an SAM domain. Residue Thr-400 is modified to Phosphothreonine. The interval Thr-402 to Ile-464 is disordered. A compositionally biased stretch (basic and acidic residues) spans Gly-424–Pro-435. Residues Pro-448–Asp-461 show a composition bias toward low complexity. Phosphoserine occurs at positions 548, 550, 556, 585, and 593. An Asymmetric dimethylarginine modification is found at Arg-595. Positions Ser-600 to Leu-636 are disordered. Over residues Gly-617–Leu-636 the composition is skewed to polar residues. At Ser-621 the chain carries Phosphoserine.

This sequence belongs to the SMAUG family.

The protein resides in the cytoplasm. The protein localises to the nucleus. Its function is as follows. Has transcriptional repressor activity. Overexpression inhibits the transcriptional activities of AP-1, p53/TP53 and CDKN1A. In Mus musculus (Mouse), this protein is Protein Smaug homolog 2 (Samd4b).